The chain runs to 185 residues: MIEEALFDAEEKMEKAVSVAKDDLGTIRTGRANPGMFARVVVDYYGSPTPVTQMSSITVPEPRMVVIKPYEAGQLGAIETAIRNSDLGVNPTNNGDILRITIPQLTEERRRELVKQAKGKGEDAKVAIRNVRRKAMDELARIQKDGEAGEDEVGRAEKELDKTTAKYVSQIDELVKHKEAELLEV.

The protein belongs to the RRF family.

Its subcellular location is the cytoplasm. Responsible for the release of ribosomes from messenger RNA at the termination of protein biosynthesis. May increase the efficiency of translation by recycling ribosomes from one round of translation to another. In Nocardia farcinica (strain IFM 10152), this protein is Ribosome-recycling factor.